The chain runs to 104 residues: A-type ATP synthase subunit F (104 aa).

The protein belongs to the V-ATPase F subunit family. Has multiple subunits with at least A(3), B(3), C, D, E, F, H, I and proteolipid K(x).

The protein resides in the cell membrane. Its function is as follows. Component of the A-type ATP synthase that produces ATP from ADP in the presence of a proton gradient across the membrane. This is A-type ATP synthase subunit F from Thermoplasma volcanium (strain ATCC 51530 / DSM 4299 / JCM 9571 / NBRC 15438 / GSS1).